We begin with the raw amino-acid sequence, 1048 residues long: Platelet-derived growth factor receptor beta (1048 aa).

The first 30 residues, 1 to 30 (MLRASAMRAAVLHLTVALAALLSSCTTVSC), serve as a signal peptide directing secretion. Residues 31–528 (LKIVPEEKQL…LVSSSLFSQV (498 aa)) are Extracellular-facing. An Ig-like C2-type 1 domain is found at 35 to 124 (PEEKQLILAE…EIKEVAVFVP (90 aa)). Disulfide bonds link cysteine 52–cysteine 108 and cysteine 153–cysteine 194. N-linked (GlcNAc...) asparagine glycans are attached at residues asparagine 87, asparagine 159, asparagine 224, and asparagine 239. 2 Ig-like C2-type domains span residues 216-309 (PEDI…ASVN) and 319-406 (AVKS…KEVT). A disulfide bridge links cysteine 240 with cysteine 293. Asparagine 309, asparagine 327, and asparagine 457 each carry an N-linked (GlcNAc...) asparagine glycan. A disulfide bridge connects residues cysteine 434 and cysteine 503. Residues 529–549 (VLLAVVLTLVPIIIMSIIILI) traverse the membrane as a helical segment. Residues 550–1048 (AVWKKKPRYE…PIPDPKPEKS (499 aa)) lie on the Cytoplasmic side of the membrane. Residues tyrosine 558, tyrosine 575, and tyrosine 577 each carry the phosphotyrosine; by autocatalysis modification. Residues 596–957 (LVLGRTLGSG…FLVHCVGDML (362 aa)) enclose the Protein kinase domain. ATP is bound by residues 602–610 (LGSGAFGRV) and lysine 630. Phosphotyrosine; by autocatalysis is present on residues tyrosine 735, tyrosine 746, tyrosine 758, tyrosine 766, and tyrosine 770. The active-site Proton acceptor is aspartate 821. A phosphotyrosine; by autocatalysis mark is found at tyrosine 852 and tyrosine 1036.

This sequence belongs to the protein kinase superfamily. Tyr protein kinase family. CSF-1/PDGF receptor subfamily. Interacts with homodimeric PDGFB and PDGFD, and with heterodimers formed by PDGFA and PDGFB. Monomer in the absence of bound ligand. Interaction with homodimeric PDGFB, heterodimers formed by PDGFA and PDGFB or homodimeric PDGFD, leads to receptor dimerization, where both PDGFRA homodimers and heterodimers with PDGFRB are observed. In terms of processing, ubiquitinated. After autophosphorylation, the receptor is polyubiquitinated, leading to its degradation. Post-translationally, autophosphorylated on tyrosine residues upon ligand binding. Autophosphorylation occurs in trans, i.e. one subunit of the dimeric receptor phosphorylates tyrosine residues on the other subunit.

It localises to the cell membrane. The protein resides in the cytoplasmic vesicle. It is found in the lysosome lumen. The catalysed reaction is L-tyrosyl-[protein] + ATP = O-phospho-L-tyrosyl-[protein] + ADP + H(+). With respect to regulation, present in an inactive conformation in the absence of bound ligand. Binding of PDGFB and/or PDGFD leads to dimerization and activation by autophosphorylation on tyrosine residues. Functionally, tyrosine-protein kinase that acts as a cell-surface receptor for homodimeric PDGFB and PDGFD and for heterodimers formed by PDGFA and PDGFB, and plays an essential role in the regulation of embryonic development, cell proliferation, survival, differentiation, chemotaxis and migration. Plays an essential role in blood vessel development by promoting proliferation, migration and recruitment of pericytes and smooth muscle cells to endothelial cells. Required for normal development of the cardiovascular system. Required for normal recruitment of pericytes (mesangial cells) in the kidney glomerulus, and for normal formation of a branched network of capillaries in kidney glomeruli. Promotes rearrangement of the actin cytoskeleton and the formation of membrane ruffles. Binding of its cognate ligands - homodimeric PDGFB, heterodimers formed by PDGFA and PDGFB or homodimeric PDGFD -leads to the activation of several signaling cascades; the response depends on the nature of the bound ligand and is modulated by the formation of heterodimers between PDGFRA and PDGFRB. Receptor signaling is down-regulated by protein phosphatases that dephosphorylate the receptor and its down-stream effectors, and by rapid internalization of the activated receptor. In Takifugu rubripes (Japanese pufferfish), this protein is Platelet-derived growth factor receptor beta (pdgfrb).